The chain runs to 631 residues: MSTTTLTRREQRAKAQHFIDTLEGTAFPNSKRIYVTGSQHDIRVPMREIQLSPTLIGGSKDNPQFEENEAVPVYDTSGPYGDPEVAINVQQGLAKLRQPWIDARNDSEELDDRSSAYTRERLADDGLDDLRFTGLLTPKRAKAGKRVTQLHYARQGIVTPEMEFIAIRENMGRERIRSEVLRHQHPGMNFGARLPENITPEFVRDEVAAGRAIIPANINHPESEPMIIGRNFLVKVNANIGNSAVTSSIEEEVEKLVWSTRWGADTVMDLSTGRYIHETREWILRNSPVPIGTVPIYQALEKVNGIAEDLTWEAFRDTLLEQAEQGVDYFTIHAGVLLRYVPMTAKRLTGIVSRGGSIMAKWCLSHHKENFLFEHFREICEICAAYDVSLSLGDGLRPGSIQDANDEAQFSELHTLGELTKIAWEYDVQVMIEGPGHVPMHMIQRNMTEELESCHEAPFYTLGPLTTDIAPGYDHFTSGIGAAMIGWFGCAMLCYVTPKEHLGLPNKEDVKQGLITYKIAAHAADLAKGHPGAQIRDNAMSKARFEFRWEDQFNLALDPFTARAYHDETLPQESGKVAHFCSMCGPKFCSMKISQGVRDYAAAQAIEVGMADMSENFRAKGGEIYLKREEA.

Substrate-binding positions include Asn239, Met268, Tyr297, His333, 353–355, 394–397, and Glu433; these read SRG and DGLR. Zn(2+) is bound at residue His437. Tyr460 lines the substrate pocket. Residue His501 coordinates Zn(2+). Residues Cys581, Cys584, and Cys589 each contribute to the [4Fe-4S] cluster site.

It belongs to the ThiC family. As to quaternary structure, homodimer. It depends on [4Fe-4S] cluster as a cofactor.

The catalysed reaction is 5-amino-1-(5-phospho-beta-D-ribosyl)imidazole + S-adenosyl-L-methionine = 4-amino-2-methyl-5-(phosphooxymethyl)pyrimidine + CO + 5'-deoxyadenosine + formate + L-methionine + 3 H(+). Its pathway is cofactor biosynthesis; thiamine diphosphate biosynthesis. In terms of biological role, catalyzes the synthesis of the hydroxymethylpyrimidine phosphate (HMP-P) moiety of thiamine from aminoimidazole ribotide (AIR) in a radical S-adenosyl-L-methionine (SAM)-dependent reaction. The protein is Phosphomethylpyrimidine synthase of Salmonella dublin (strain CT_02021853).